Consider the following 283-residue polypeptide: 4-hydroxy-3-methylbut-2-enyl diphosphate reductase (283 aa).

[4Fe-4S] cluster is bound at residue Cys12. The (2E)-4-hydroxy-3-methylbut-2-enyl diphosphate site is built by His40 and His72. His40 and His72 together coordinate dimethylallyl diphosphate. The isopentenyl diphosphate site is built by His40 and His72. Cys94 contributes to the [4Fe-4S] cluster binding site. (2E)-4-hydroxy-3-methylbut-2-enyl diphosphate is bound at residue His122. His122 serves as a coordination point for dimethylallyl diphosphate. His122 contacts isopentenyl diphosphate. The Proton donor role is filled by Glu124. Thr160 lines the (2E)-4-hydroxy-3-methylbut-2-enyl diphosphate pocket. Residue Cys188 participates in [4Fe-4S] cluster binding. 3 residues coordinate (2E)-4-hydroxy-3-methylbut-2-enyl diphosphate: Ser216, Asn218, and Ser259. 3 residues coordinate dimethylallyl diphosphate: Ser216, Asn218, and Ser259. 3 residues coordinate isopentenyl diphosphate: Ser216, Asn218, and Ser259.

The protein belongs to the IspH family. It depends on [4Fe-4S] cluster as a cofactor.

The catalysed reaction is isopentenyl diphosphate + 2 oxidized [2Fe-2S]-[ferredoxin] + H2O = (2E)-4-hydroxy-3-methylbut-2-enyl diphosphate + 2 reduced [2Fe-2S]-[ferredoxin] + 2 H(+). The enzyme catalyses dimethylallyl diphosphate + 2 oxidized [2Fe-2S]-[ferredoxin] + H2O = (2E)-4-hydroxy-3-methylbut-2-enyl diphosphate + 2 reduced [2Fe-2S]-[ferredoxin] + 2 H(+). The protein operates within isoprenoid biosynthesis; dimethylallyl diphosphate biosynthesis; dimethylallyl diphosphate from (2E)-4-hydroxy-3-methylbutenyl diphosphate: step 1/1. It functions in the pathway isoprenoid biosynthesis; isopentenyl diphosphate biosynthesis via DXP pathway; isopentenyl diphosphate from 1-deoxy-D-xylulose 5-phosphate: step 6/6. Catalyzes the conversion of 1-hydroxy-2-methyl-2-(E)-butenyl 4-diphosphate (HMBPP) into a mixture of isopentenyl diphosphate (IPP) and dimethylallyl diphosphate (DMAPP). Acts in the terminal step of the DOXP/MEP pathway for isoprenoid precursor biosynthesis. This chain is 4-hydroxy-3-methylbut-2-enyl diphosphate reductase, found in Dictyoglomus thermophilum (strain ATCC 35947 / DSM 3960 / H-6-12).